The sequence spans 332 residues: 2,3-diketo-L-gulonate reductase (332 aa).

His44 (proton donor) is an active-site residue. Residues 168–174 (ITMIDMS), 224–225 (WK), and 304–306 (GHE) each bind NAD(+).

The protein belongs to the LDH2/MDH2 oxidoreductase family. DlgD subfamily. Homodimer.

It localises to the cytoplasm. It catalyses the reaction 3-dehydro-L-gulonate + NAD(+) = 2,3-dioxo-L-gulonate + NADH + H(+). The enzyme catalyses 3-dehydro-L-gulonate + NADP(+) = 2,3-dioxo-L-gulonate + NADPH + H(+). Its function is as follows. Catalyzes the reduction of 2,3-diketo-L-gulonate in the presence of NADH, to form 3-keto-L-gulonate. In Citrobacter koseri (strain ATCC BAA-895 / CDC 4225-83 / SGSC4696), this protein is 2,3-diketo-L-gulonate reductase.